We begin with the raw amino-acid sequence, 173 residues long: Mitochondrial import inner membrane translocase subunit TIM22-1 (173 aa).

The N-terminal 18 residues, 1–18 (MADSSAAEPTTGASSPPV), are a transit peptide targeting the mitochondrion. The segment at 1–26 (MADSSAAEPTTGASSPPVASDENSTQ) is disordered. Helical transmembrane passes span 52–72 (VTSG…LGAL), 101–119 (SCKT…ECIV), 128–144 (TVNT…SMSA), and 151–168 (ACIG…IEKF).

Belongs to the Tim17/Tim22/Tim23 family. In terms of tissue distribution, expressed in young cotyledons, roots, flowers and leaves.

It localises to the mitochondrion inner membrane. Essential core component of the TIM22 complex, a complex that mediates the import and insertion of multi-pass transmembrane proteins into the mitochondrial inner membrane. In Arabidopsis thaliana (Mouse-ear cress), this protein is Mitochondrial import inner membrane translocase subunit TIM22-1 (TIM22-1).